Consider the following 813-residue polypeptide: Leucine--tRNA ligase (813 aa).

Positions 41–51 match the 'HIGH' region motif; it reads PYPSGTLHMGH. Residues 575-579 carry the 'KMSKS' region motif; it reads KMSKS. Lys-578 lines the ATP pocket.

This sequence belongs to the class-I aminoacyl-tRNA synthetase family.

The protein localises to the cytoplasm. The enzyme catalyses tRNA(Leu) + L-leucine + ATP = L-leucyl-tRNA(Leu) + AMP + diphosphate. This Francisella tularensis subsp. holarctica (strain FTNF002-00 / FTA) protein is Leucine--tRNA ligase.